The primary structure comprises 657 residues: Transmembrane protein 232 (657 aa).

2 consecutive transmembrane segments (helical) span residues 168 to 188 (IGYLVFLRLFIFFLHGHLESF) and 353 to 373 (WAWNVVYIYTVILAEICLYAA).

Its subcellular location is the membrane. Its function is as follows. Plays a critical role for male fertility and sperm motility by regulating sperm cytoplasm removal and maintaining axoneme integrity. This Homo sapiens (Human) protein is Transmembrane protein 232 (TMEM232).